Consider the following 148-residue polypeptide: Deoxyuridine 5'-triphosphate nucleotidohydrolase (148 aa).

It belongs to the dUTPase family. Mg(2+) serves as cofactor.

The enzyme catalyses dUTP + H2O = dUMP + diphosphate + H(+). It participates in pyrimidine metabolism; dUMP biosynthesis; dUMP from dCTP (dUTP route): step 2/2. Functionally, this enzyme decreases the intracellular concentration of dUTP so that uracil cannot be incorporated into viral progeny DNA. This activity is sufficient to exclude uracil from the DNA during phage replication. In the case of dUTPase mutant phages, the host dUTPase activity is not sufficient to exclude uracil from T5 DNA and uracil are incorporated, leading to decreased phage viability. The polypeptide is Deoxyuridine 5'-triphosphate nucleotidohydrolase (DUT) (Escherichia coli (Enterobacteria phage T5)).